A 337-amino-acid chain; its full sequence is MDPESFGLDKTAIEICNSYMPVLDIEPRLIREGFKSLYDIQKKHISKTKQYQLNKENGDSLMDVHFFYPSGYEQNPVDHKYKAIFYIHGGGFMVDGIKKLPREISDRTNSILIYPDYGLTPEFKYPLGLKQCYQLFTDIMNGNFNPFNDLINDSISIVGESSGGNFALSLPLMLKLNNSTFFKKISKVLVYYPITDCNFETPSYNRFSEKFYLTKEGMKWCWNHYTNNDSERDEITCCPLKATIDQLKDFPETLVITAETDVLSSEGEQFGLKLSNANVKVSVLRILKTIHGFVSLDQTNDSIACRVGMDLSMNFLNNISNNSIINENNNKTLLKLL.

Residues 88–90 (HGG) carry the Involved in the stabilization of the negatively charged intermediate by the formation of the oxyanion hole motif. Residues Ser161, Asp261, and His291 contribute to the active site.

It belongs to the 'GDXG' lipolytic enzyme family.

In Dictyostelium discoideum (Social amoeba), this protein is Vegetative-specific protein H5 (cinB).